Here is a 265-residue protein sequence, read N- to C-terminus: 2-amino-3,7-dideoxy-D-threo-hept-6-ulosonate synthase (265 aa).

Asp25 acts as the Proton acceptor in catalysis. 1-deoxy-D-threo-hexo-2,5-diulose 6-phosphate-binding positions include 25–29 (DHGIT) and 144–146 (YAR). The active-site Proton donor is the Tyr144. Lys174 (schiff-base intermediate with substrate) is an active-site residue. 1-deoxy-D-threo-hexo-2,5-diulose 6-phosphate contacts are provided by residues 199–200 (GG) and 226–227 (GR).

It belongs to the DeoC/FbaB aldolase family. ADHS subfamily. As to quaternary structure, homodecamer.

The catalysed reaction is 1-deoxy-D-threo-hexo-2,5-diulose 6-phosphate + L-aspartate 4-semialdehyde = 2,3-dioxopropyl phosphate + 2-amino-2,3,7-trideoxy-D-lyxo-hept-6-ulosonate. Catalyzes a transaldol reaction between 6-deoxy-5-ketofructose 1-phosphate (DKFP) and L-aspartate semialdehyde (ASA) with an elimination of hydroxypyruvaldehyde phosphate to yield 2-amino-3,7-dideoxy-D-threo-hept-6-ulosonate (ADH). Plays a key role in an alternative pathway of the biosynthesis of 3-dehydroquinate (DHQ), which is involved in the canonical pathway for the biosynthesis of aromatic amino acids. The polypeptide is 2-amino-3,7-dideoxy-D-threo-hept-6-ulosonate synthase (Halobacterium salinarum (strain ATCC 700922 / JCM 11081 / NRC-1) (Halobacterium halobium)).